The primary structure comprises 540 residues: Cytochrome P450 monooxygenase prx8 (540 aa).

Residues 50 to 68 (ALGAAIALFACACAYALVA) form a helical membrane-spanning segment. N-linked (GlcNAc...) asparagine glycosylation is present at N460. Heme is bound at residue C483.

It belongs to the cytochrome P450 family. Heme is required as a cofactor.

The protein localises to the membrane. It participates in sesquiterpene biosynthesis. Functionally, cytochrome P450 monooxygenase; part of the gene cluster that mediates the biosynthesis of PR-toxin, a bicyclic sesquiterpene belonging to the eremophilane class and acting as a mycotoxin. The first step of the pathway is catalyzed by the aristolochene synthase which performs the cyclization of trans,trans-farnesyl diphosphate (FPP) to the bicyclic sesquiterpene aristolochene. Following the formation of aristolochene, the non-oxygenated aristolochene is converted to the trioxygenated intermediate eremofortin B, via 7-epi-neopetasone. This conversion appears to involve three enzymes, a hydroxysterol oxidase-like enzyme, the quinone-oxidase prx3 that forms the quinone-type-structure in the bicyclic nucleus of aristolochene with the C8-oxo group and the C-3 hydroxyl group, and the P450 monooxygenase prx9 that introduces the epoxide at the double bond between carbons 1 and 2. No monoxy or dioxy-intermediates have been reported to be released to the broth, so these three early oxidative reactions may be coupled together. Eremofortin B is further oxidized by another P450 monooxygenase, that introduces a second epoxide between carbons 7 and 11 prior to acetylation to eremofortin A by the acetyltransferase prx11. The second epoxidation may be performed by a second P450 monooxygenase. After the acetylation step, eremofortin A is converted to eremofortin C and then to PR-toxin. First the conversion of eremofortin A to eremofortin C proceeds by oxidation of the side chain of the molecule at C-12 and is catalyzed by the short-chain oxidoreductase prx1. The cytochrome P450 monooxygenase prx8 also plays a role in this step. The primary alcohol formed at C-12 is finally oxidized by the short-chain alcohol dehydrogenase prx4 that forms PR-toxin. The chain is Cytochrome P450 monooxygenase prx8 from Penicillium rubens (strain ATCC 28089 / DSM 1075 / NRRL 1951 / Wisconsin 54-1255) (Penicillium chrysogenum).